Here is a 179-residue protein sequence, read N- to C-terminus: Guanosine-3',5'-bis(diphosphate) 3'-pyrophosphohydrolase MESH1 (179 aa).

The HD domain maps to 32–127; that stretch reads YINHPLGVAR…VKLADKLYNL (96 aa). Residues histidine 35, histidine 61, and aspartate 62 each coordinate Mn(2+). Active-site nucleophile residues include glutamate 65 and aspartate 66. Aspartate 122 is a binding site for Mn(2+).

It belongs to the MESH1 family. The cofactor is Mn(2+).

The catalysed reaction is guanosine 3',5'-bis(diphosphate) + H2O = GDP + diphosphate + H(+). Its function is as follows. ppGpp hydrolyzing enzyme involved in starvation response. This Xenopus tropicalis (Western clawed frog) protein is Guanosine-3',5'-bis(diphosphate) 3'-pyrophosphohydrolase MESH1 (hddc3).